We begin with the raw amino-acid sequence, 365 residues long: Phospho-N-acetylmuramoyl-pentapeptide-transferase (365 aa).

10 consecutive transmembrane segments (helical) span residues 29 to 49 (VGGL…IIVW), 73 to 93 (GTPT…VIIW), 97 to 117 (SNIY…LGLV), 133 to 153 (ILNK…IMFI), 171 to 191 (IVCK…VGTS), 202 to 222 (GLVI…TWVV), 242 to 262 (LVVV…FNSY), 266 to 286 (IFMG…VSIL), 291 to 311 (YLLL…IFQV), and 341 to 361 (IVVR…VIFI).

The protein belongs to the glycosyltransferase 4 family. MraY subfamily. Mg(2+) serves as cofactor.

The protein localises to the cell inner membrane. The enzyme catalyses UDP-N-acetyl-alpha-D-muramoyl-L-alanyl-gamma-D-glutamyl-meso-2,6-diaminopimeloyl-D-alanyl-D-alanine + di-trans,octa-cis-undecaprenyl phosphate = di-trans,octa-cis-undecaprenyl diphospho-N-acetyl-alpha-D-muramoyl-L-alanyl-D-glutamyl-meso-2,6-diaminopimeloyl-D-alanyl-D-alanine + UMP. It participates in cell wall biogenesis; peptidoglycan biosynthesis. Functionally, catalyzes the initial step of the lipid cycle reactions in the biosynthesis of the cell wall peptidoglycan: transfers peptidoglycan precursor phospho-MurNAc-pentapeptide from UDP-MurNAc-pentapeptide onto the lipid carrier undecaprenyl phosphate, yielding undecaprenyl-pyrophosphoryl-MurNAc-pentapeptide, known as lipid I. In Blochmanniella floridana, this protein is Phospho-N-acetylmuramoyl-pentapeptide-transferase.